The chain runs to 353 residues: GDSL esterase/lipase At5g03810 (353 aa).

The signal sequence occupies residues 1 to 24 (MKMFITMSMCLSVIACFYAGVGTG). S37 serves as the catalytic Nucleophile. N100, N255, N256, N260, and N320 each carry an N-linked (GlcNAc...) asparagine glycan. Catalysis depends on residues D328 and H331.

This sequence belongs to the 'GDSL' lipolytic enzyme family.

It is found in the secreted. The polypeptide is GDSL esterase/lipase At5g03810 (Arabidopsis thaliana (Mouse-ear cress)).